Reading from the N-terminus, the 403-residue chain is E2F transcription factor-like E2FE (403 aa).

The DNA-binding element occupies 34-99 (RKQKSLGLLC…RAKNQYTWKG (66 aa)). Residues 128 to 167 (VKGSDDEDDDEESSQPHSSSQTDSSKPGSLPQSSDPSKID) form a disordered region. The segment covering 142 to 152 (QPHSSSQTDSS) has biased composition (low complexity). Residues 153–163 (KPGSLPQSSDP) show a composition bias toward polar residues. A DNA-binding region spans residues 169 to 250 (RREKSLGLLT…SRKPAFKWLG (82 aa)). Positions 282–319 (VKRSKSSSSSQENATERRLKMKKHSTPESSYNKSFDVH) are disordered.

The protein belongs to the E2F/DP family. Expressed exclusively in mitotically dividing cells. Highly expressed in young leaves and mature flowers. Lower expression in young stalk and in young and mature flowers.

It localises to the nucleus. Inhibitor of E2F-dependent activation of gene expression. Binds specifically the E2 recognition site without interacting with DP proteins and prevents transcription activation by E2F/DP heterodimers. Controls the timing of endocycle onset and inhibits endoreduplication. The protein is E2F transcription factor-like E2FE (E2FE) of Arabidopsis thaliana (Mouse-ear cress).